The following is a 901-amino-acid chain: Probable inorganic carbon transporter subunit DabA (901 aa).

Residues C424, D426, H606, and C621 each contribute to the Zn(2+) site.

The protein belongs to the inorganic carbon transporter (TC 9.A.2) DabA family. Forms a complex with DabB. Requires Zn(2+) as cofactor.

The protein localises to the cell membrane. Its function is as follows. Part of an energy-coupled inorganic carbon pump. The protein is Probable inorganic carbon transporter subunit DabA of Staphylococcus aureus (strain MSSA476).